The sequence spans 88 residues: MVGEQPNIGDLVSQEEPSVLDLNCYEDIPAEEEESEYPYAIVLPCGLCDQLLRLTCVSDLSTLTRLEELLLGSLRIVCPLCAIRHQRH.

The E7 terminal domain stretch occupies residues 1–37; that stretch reads MVGEQPNIGDLVSQEEPSVLDLNCYEDIPAEEEESEY. The LXCXE motif; interaction with host RB1 and TMEM173/STING signature appears at 22–26; it reads LNCYE. Residues 45-81 fold into a zinc finger; it reads CGLCDQLLRLTCVSDLSTLTRLEELLLGSLRIVCPLC. Positions 63–71 match the Nuclear export signal motif; sequence LTRLEELLL.

This sequence belongs to the papillomaviridae E7 protein family. Homodimer. Homooligomer. Interacts with host RB1; this interaction induces dissociation of RB1-E2F1 complex thereby disrupting RB1 activity. Interacts with host EP300; this interaction represses EP300 transcriptional activity. Interacts with protein E2; this interaction inhibits E7 oncogenic activity. Interacts with host TMEM173/STING; this interaction impairs the ability of TMEM173/STING to sense cytosolic DNA and promote the production of type I interferon (IFN-alpha and IFN-beta). In terms of processing, highly phosphorylated.

It localises to the host cytoplasm. The protein resides in the host nucleus. Its function is as follows. Plays a role in viral genome replication by driving entry of quiescent cells into the cell cycle. Stimulation of progression from G1 to S phase allows the virus to efficiently use the cellular DNA replicating machinery to achieve viral genome replication. E7 protein has both transforming and trans-activating activities. Induces the disassembly of the E2F1 transcription factor from RB1, with subsequent transcriptional activation of E2F1-regulated S-phase genes. Interferes with host histone deacetylation mediated by HDAC1 and HDAC2, leading to transcription activation. Also plays a role in the inhibition of both antiviral and antiproliferative functions of host interferon alpha. Interaction with host TMEM173/STING impairs the ability of TMEM173/STING to sense cytosolic DNA and promote the production of type I interferon (IFN-alpha and IFN-beta). This is Protein E7 from Human papillomavirus type 63.